The sequence spans 222 residues: Ras-related protein RabT1 (222 aa).

G37–S44 serves as a coordination point for GTP. Residues V59 to F66 carry the Effector region motif. GTP-binding positions include D85–C89 and N145–D148. At C219 the chain carries Cysteine methyl ester. C219 carries the S-geranylgeranyl cysteine lipid modification. A propeptide spans N220–L222 (removed in mature form).

This sequence belongs to the small GTPase superfamily. Rab family.

It localises to the cell membrane. This is Ras-related protein RabT1 (rabT1) from Dictyostelium discoideum (Social amoeba).